Here is a 211-residue protein sequence, read N- to C-terminus: Protein-L-isoaspartate O-methyltransferase (211 aa).

Ser62 is an active-site residue.

It belongs to the methyltransferase superfamily. L-isoaspartyl/D-aspartyl protein methyltransferase family.

It is found in the cytoplasm. It catalyses the reaction [protein]-L-isoaspartate + S-adenosyl-L-methionine = [protein]-L-isoaspartate alpha-methyl ester + S-adenosyl-L-homocysteine. Its function is as follows. Catalyzes the methyl esterification of L-isoaspartyl residues in peptides and proteins that result from spontaneous decomposition of normal L-aspartyl and L-asparaginyl residues. It plays a role in the repair and/or degradation of damaged proteins. This is Protein-L-isoaspartate O-methyltransferase from Shewanella sp. (strain MR-4).